The following is a 301-amino-acid chain: Ubiquinone biosynthesis protein COQ4, mitochondrial (301 aa).

The transit peptide at 1-46 (MEVTLKRSAALARQTTPLLRPLRPVATYPSNNNNNNNPTPQQRRPY) directs the protein to the mitochondrion. The segment at 14–48 (QTTPLLRPLRPVATYPSNNNNNNNPTPQQRRPYSL) is disordered. Residues 38 to 48 (PTPQQRRPYSL) are compositionally biased toward polar residues. Positions 185, 186, 189, and 201 each coordinate Zn(2+).

The protein belongs to the COQ4 family. As to quaternary structure, component of a multi-subunit COQ enzyme complex, composed of at least COQ3, COQ4, COQ5, COQ6, COQ7 and COQ9. It depends on Zn(2+) as a cofactor.

It localises to the mitochondrion inner membrane. It catalyses the reaction a 4-hydroxy-3-methoxy-5-(all-trans-polyprenyl)benzoate + H(+) = a 2-methoxy-6-(all-trans-polyprenyl)phenol + CO2. It participates in cofactor biosynthesis; ubiquinone biosynthesis. Lyase that catalyzes the C1-decarboxylation of 4-hydroxy-3-methoxy-5-(all-trans-polyprenyl)benzoic acid into 2-methoxy-6-(all-trans-polyprenyl)phenol during ubiquinone biosynthesis. The polypeptide is Ubiquinone biosynthesis protein COQ4, mitochondrial (Podospora anserina (strain S / ATCC MYA-4624 / DSM 980 / FGSC 10383) (Pleurage anserina)).